The chain runs to 141 residues: Large ribosomal subunit protein uL14 (141 aa).

Belongs to the universal ribosomal protein uL14 family. In terms of assembly, part of the 50S ribosomal subunit. Forms a cluster with proteins L3 and L24e, part of which may contact the 16S rRNA in 2 intersubunit bridges.

In terms of biological role, binds to 23S rRNA. Forms part of two intersubunit bridges in the 70S ribosome. In Pyrococcus horikoshii (strain ATCC 700860 / DSM 12428 / JCM 9974 / NBRC 100139 / OT-3), this protein is Large ribosomal subunit protein uL14.